The chain runs to 229 residues: Octanoyltransferase (229 aa).

One can recognise a BPL/LPL catalytic domain in the interval 45–220; sequence ATAVDELWVV…ELARQFCFVL (176 aa). Substrate-binding positions include 84–91, 151–153, and 164–166; these read RGGQVTYH, ALG, and GVA. Residue cysteine 182 is the Acyl-thioester intermediate of the active site.

This sequence belongs to the LipB family.

It localises to the cytoplasm. It catalyses the reaction octanoyl-[ACP] + L-lysyl-[protein] = N(6)-octanoyl-L-lysyl-[protein] + holo-[ACP] + H(+). Its pathway is protein modification; protein lipoylation via endogenous pathway; protein N(6)-(lipoyl)lysine from octanoyl-[acyl-carrier-protein]: step 1/2. Its function is as follows. Catalyzes the transfer of endogenously produced octanoic acid from octanoyl-acyl-carrier-protein onto the lipoyl domains of lipoate-dependent enzymes. Lipoyl-ACP can also act as a substrate although octanoyl-ACP is likely to be the physiological substrate. The polypeptide is Octanoyltransferase (Xylella fastidiosa (strain 9a5c)).